Here is a 248-residue protein sequence, read N- to C-terminus: Coproheme decarboxylase (248 aa).

Fe-coproporphyrin III-binding positions include Arg-130, 144–148 (YPMDK), His-171, Gln-184, and Ser-222. The active site involves Tyr-144.

It belongs to the ChdC family. Type 1 subfamily. Requires Fe-coproporphyrin III as cofactor.

The catalysed reaction is Fe-coproporphyrin III + 2 H2O2 + 2 H(+) = heme b + 2 CO2 + 4 H2O. The enzyme catalyses Fe-coproporphyrin III + H2O2 + H(+) = harderoheme III + CO2 + 2 H2O. It catalyses the reaction harderoheme III + H2O2 + H(+) = heme b + CO2 + 2 H2O. The protein operates within porphyrin-containing compound metabolism; protoheme biosynthesis. Its function is as follows. Involved in coproporphyrin-dependent heme b biosynthesis. Catalyzes the decarboxylation of Fe-coproporphyrin III (coproheme) to heme b (protoheme IX), the last step of the pathway. The reaction occurs in a stepwise manner with a three-propionate intermediate. This chain is Coproheme decarboxylase, found in Geobacillus sp. (strain WCH70).